A 208-amino-acid polypeptide reads, in one-letter code: Calcyphosin-like protein (208 aa).

4 EF-hand domains span residues 39–74 (AGIK…YAVV), 75–110 (MEKE…PMSR), 111–146 (ARKE…KHHP), and 154–191 (SEEQ…VSAS). Residues aspartate 52, aspartate 54, asparagine 56, threonine 58, glutamate 63, aspartate 88, aspartate 90, asparagine 92, threonine 94, and glutamate 99 each coordinate Ca(2+).

It localises to the cytoplasm. The chain is Calcyphosin-like protein (CAPSL) from Homo sapiens (Human).